Here is a 104-residue protein sequence, read N- to C-terminus: Pyrimidine/purine nucleoside phosphorylase (104 aa).

It belongs to the nucleoside phosphorylase PpnP family.

The enzyme catalyses a purine D-ribonucleoside + phosphate = a purine nucleobase + alpha-D-ribose 1-phosphate. It catalyses the reaction adenosine + phosphate = alpha-D-ribose 1-phosphate + adenine. It carries out the reaction cytidine + phosphate = cytosine + alpha-D-ribose 1-phosphate. The catalysed reaction is guanosine + phosphate = alpha-D-ribose 1-phosphate + guanine. The enzyme catalyses inosine + phosphate = alpha-D-ribose 1-phosphate + hypoxanthine. It catalyses the reaction thymidine + phosphate = 2-deoxy-alpha-D-ribose 1-phosphate + thymine. It carries out the reaction uridine + phosphate = alpha-D-ribose 1-phosphate + uracil. The catalysed reaction is xanthosine + phosphate = alpha-D-ribose 1-phosphate + xanthine. In terms of biological role, catalyzes the phosphorolysis of diverse nucleosides, yielding D-ribose 1-phosphate and the respective free bases. Can use uridine, adenosine, guanosine, cytidine, thymidine, inosine and xanthosine as substrates. Also catalyzes the reverse reactions. This is Pyrimidine/purine nucleoside phosphorylase from Trichlorobacter lovleyi (strain ATCC BAA-1151 / DSM 17278 / SZ) (Geobacter lovleyi).